Reading from the N-terminus, the 207-residue chain is MSERDDRAAFLAANDVSRETLDRLDRVIDTLDVWRQKSNLIGPKEWPQIWTRHVGDSWQLLDHIPETAHLVDLGSGAGFPGLIIAAARSLGHVTMIESVGKKCAFLRAAIQEADLSAAVHQGRVEAAPPIKAEFVTARAFAPLPELLDYAAPWLRKGAVGVFPKGERWNEELTAARQRWNFAYEAIPSRSGGSGVILIIREVARRND.

S-adenosyl-L-methionine contacts are provided by residues Gly74, Phe79, 124-125 (VE), and Arg138.

Belongs to the methyltransferase superfamily. RNA methyltransferase RsmG family.

The protein resides in the cytoplasm. It carries out the reaction guanosine(527) in 16S rRNA + S-adenosyl-L-methionine = N(7)-methylguanosine(527) in 16S rRNA + S-adenosyl-L-homocysteine. In terms of biological role, specifically methylates the N7 position of guanine in position 527 of 16S rRNA. The chain is Ribosomal RNA small subunit methyltransferase G from Hyphomonas neptunium (strain ATCC 15444).